Consider the following 548-residue polypeptide: Membrane-associated tyrosine- and threonine-specific cdc2-inhibitory kinase (548 aa).

The segment at 61 to 89 (PNKQRSWSQPRPQSVSFRSPQNKTPASKL) is disordered. Residues 63-85 (KQRSWSQPRPQSVSFRSPQNKTP) show a composition bias toward polar residues. The Protein kinase domain maps to 103–353 (FKSICKLGRG…VDWLLSLPAI (251 aa)). ATP contacts are provided by residues 109-117 (LGRGSFGEV) and Lys132. Residue Asp226 is the Proton acceptor of the active site. Positions 231, 244, and 246 each coordinate Mg(2+). The Membrane-association motif signature appears at 376–392 (VYQFIVWLLSFVFQWLN). The interval 464-523 (SPDLLSRPSLGSTSTPRNLSPEFSMRKRSALPLTPNVSRISQDSTGKSRSPSTSHSSSGF) is disordered. Positions 472–481 (SLGSTSTPRN) are enriched in polar residues. Thr478 carries the phosphothreonine; by CDK1 modification. Low complexity predominate over residues 507 to 521 (STGKSRSPSTSHSSS).

The protein belongs to the protein kinase superfamily. Ser/Thr protein kinase family. WEE1 subfamily. In terms of assembly, interacts with CDC2-CCNB1 complex. Interacts with Mos during oocyte maturation. Post-translationally, autophosphorylated. Phosphorylated on undefined residues by RSK2 and Mos kinases. Phosphorylation at Thr-478 by cdk1 creates a docking site for plk1/plx1, leading to subsequent phosphorylation by plk1/plk1 and inhibition of the protein kinase activity kinase activity.

The protein resides in the endoplasmic reticulum membrane. It localises to the golgi apparatus membrane. The catalysed reaction is L-seryl-[protein] + ATP = O-phospho-L-seryl-[protein] + ADP + H(+). It carries out the reaction L-threonyl-[protein] + ATP = O-phospho-L-threonyl-[protein] + ADP + H(+). Its activity is regulated as follows. Negatively regulated by hyperphosphorylation during mitosis. The plk1/plk1 protein kinase may be required for mitotic phosphorylation. Inactivated during oocyte maturation by phosphorylation by RSK2 and Mos kinase. In terms of biological role, acts as a negative regulator of entry into mitosis (G2 to M transition) by phosphorylation of the CDK1 kinase specifically when CDK1 is complexed to cyclins. Mediates phosphorylation of CDK1 predominantly on 'Thr-14'. Also involved in Golgi fragmentation. May be involved in phosphorylation of CDK1 on 'Tyr-15' to a lesser degree, however tyrosine kinase activity is unclear and may be indirect. The protein is Membrane-associated tyrosine- and threonine-specific cdc2-inhibitory kinase (pkmyt1) of Xenopus laevis (African clawed frog).